A 924-amino-acid polypeptide reads, in one-letter code: Probable dipeptidyl-aminopeptidase B (924 aa).

A compositionally biased stretch (polar residues) spans 1-12 (MPSTYSDDNTLR). The interval 1–102 (MPSTYSDDNT…RSNQRSSADG (102 aa)) is disordered. Topologically, residues 1 to 111 (MPSTYSDDNT…GQRMDRSLRR (111 aa)) are cytoplasmic. Residues 14–23 (GLDRFRDHSP) are compositionally biased toward basic and acidic residues. A compositionally biased stretch (polar residues) spans 31–43 (SQETDSTVSTTSI). Over residues 47 to 58 (RIQERLDTKEFP) the composition is skewed to basic and acidic residues. Residues 87-100 (NASPSSRSNQRSSA) are compositionally biased toward low complexity. A helical; Signal-anchor for type II membrane protein transmembrane segment spans residues 112-132 (WLFIVSGALVATWVIGLIFFV). Topologically, residues 133–924 (SSKAYKPSSS…GMKRRALPTA (792 aa)) are vacuolar. 2 N-linked (GlcNAc...) asparagine glycosylation sites follow: Asn-231 and Asn-364. The Charge relay system role is filled by Ser-768. An N-linked (GlcNAc...) asparagine glycan is attached at Asn-827. Catalysis depends on charge relay system residues Asp-845 and His-878.

Belongs to the peptidase S9B family.

Its subcellular location is the vacuole membrane. It catalyses the reaction Release of an N-terminal dipeptide, Xaa-Yaa-|-Zaa-, from a polypeptide, preferentially when Yaa is Pro, provided Zaa is neither Pro nor hydroxyproline.. Its function is as follows. Type IV dipeptidyl-peptidase which removes N-terminal dipeptides sequentially from polypeptides having unsubstituted N-termini provided that the penultimate residue is proline. The protein is Probable dipeptidyl-aminopeptidase B (dapB) of Neurospora crassa (strain ATCC 24698 / 74-OR23-1A / CBS 708.71 / DSM 1257 / FGSC 987).